We begin with the raw amino-acid sequence, 1501 residues long: Opaque-specific ABC transporter CDR3 (1501 aa).

Topologically, residues 1–502 (MAKTSQAEGQ…KRYWDRMRGD (502 aa)) are cytoplasmic. Residues 58-87 (TYTTATMHPNGINPISDKTDPTLDPESPSF) are disordered. Residues 140–395 (KYARNIFNKF…FKKMGFVCQD (256 aa)) form the ABC transporter 1 domain. The chain crosses the membrane as a helical span at residues 503 to 523 (IIVPLSTVAGNIAMALILSSV). A glycan (N-linked (GlcNAc...) asparagine) is linked at Asn-530. Transmembrane regions (helical) follow at residues 540 to 560 (VMYYALLFNAYSSVLEIYNMY), 589 to 609 (FPLKVVCSVLFNLILYFMVNF), 614 to 634 (GAFFFYLLISFCSTLFMSHLF), 653 to 673 (LLLFALSTFSGFAIPVTYMLG), and 755 to 775 (FGVLMAFIIFLFGTTIFFVQT). At 776-1175 (NKSSISKGET…LFQQYWRTPS (400 aa)) the chain is on the cytoplasmic side. Residues 840–1083 (FHWRNLTYTV…LIEYFERNGA (244 aa)) enclose the ABC transporter 2 domain. Residue 876–883 (GASGAGKT) participates in ATP binding. Helical transmembrane passes span 1176–1196 (YIYSKFAMAVLCSLFNGFTYY), 1212–1232 (IFSMFVVLTTLAQQYVPLFVT), 1261–1281 (IPYQVLAATISFFSWYYPVGL), 1297–1317 (LMWLIMTLMFIYSSTLAQFCI), 1325–1345 (YAANWISLLLTISMIFCGVIA), 1353–1375 (FWVFLYRCTPLTYLTSAMMSIGL), and 1451–1471 (GIFIVFIVFNMAATVFSYWLF).

It belongs to the ABC transporter superfamily. ABCG family. PDR (TC 3.A.1.205) subfamily.

It is found in the membrane. The sequence is that of Opaque-specific ABC transporter CDR3 (CDR3) from Candida albicans (Yeast).